Here is a 262-residue protein sequence, read N- to C-terminus: Flap endonuclease Xni (262 aa).

Residue Asp-105 participates in Mg(2+) binding. The 88-residue stretch at 164–251 (SQFLDLMALA…NINLKDFRAN (88 aa)) folds into the 5'-3' exonuclease domain. K(+)-binding residues include Leu-172, Ala-173, Pro-181, Ile-183, and Ile-186. The interaction with DNA stretch occupies residues 185 to 190 (GIGPKS).

This sequence belongs to the Xni family. The cofactor is Mg(2+). Requires K(+) as cofactor.

In terms of biological role, has flap endonuclease activity. During DNA replication, flap endonucleases cleave the 5'-overhanging flap structure that is generated by displacement synthesis when DNA polymerase encounters the 5'-end of a downstream Okazaki fragment. This Shewanella sp. (strain W3-18-1) protein is Flap endonuclease Xni.